A 62-amino-acid chain; its full sequence is Large ribosomal subunit protein bL28 (62 aa).

The protein belongs to the bacterial ribosomal protein bL28 family.

The sequence is that of Large ribosomal subunit protein bL28 from Helicobacter hepaticus (strain ATCC 51449 / 3B1).